The following is a 78-amino-acid chain: ATP synthase subunit a (78 aa).

A helical transmembrane segment spans residues 34-54; it reads LTNIGLYLTIGIFLILTYSLL.

Belongs to the ATPase A chain family. As to quaternary structure, F-type ATPases have 2 components, CF(1) - the catalytic core - and CF(0) - the membrane proton channel. CF(1) has five subunits: alpha(3), beta(3), gamma(1), delta(1), epsilon(1). CF(0) has three main subunits: a, b and c.

The protein resides in the mitochondrion inner membrane. In terms of biological role, mitochondrial membrane ATP synthase (F(1)F(0) ATP synthase or Complex V) produces ATP from ADP in the presence of a proton gradient across the membrane which is generated by electron transport complexes of the respiratory chain. F-type ATPases consist of two structural domains, F(1) - containing the extramembraneous catalytic core and F(0) - containing the membrane proton channel, linked together by a central stalk and a peripheral stalk. During catalysis, ATP synthesis in the catalytic domain of F(1) is coupled via a rotary mechanism of the central stalk subunits to proton translocation. Key component of the proton channel; it may play a direct role in the translocation of protons across the membrane. The polypeptide is ATP synthase subunit a (atp6) (Aspergillus amstelodami).